Here is a 270-residue protein sequence, read N- to C-terminus: Glucosamine-6-phosphate deaminase (270 aa).

The active-site Proton acceptor; for enolization step is the Asp72. The active-site For ring-opening step is Asp141. His143 acts as the Proton acceptor; for ring-opening step in catalysis. Glu148 functions as the For ring-opening step in the catalytic mechanism.

This sequence belongs to the glucosamine/galactosamine-6-phosphate isomerase family. NagB subfamily.

It catalyses the reaction alpha-D-glucosamine 6-phosphate + H2O = beta-D-fructose 6-phosphate + NH4(+). It participates in amino-sugar metabolism; N-acetylneuraminate degradation; D-fructose 6-phosphate from N-acetylneuraminate: step 5/5. Allosterically activated by N-acetylglucosamine 6-phosphate (GlcNAc6P). Functionally, catalyzes the reversible isomerization-deamination of glucosamine 6-phosphate (GlcN6P) to form fructose 6-phosphate (Fru6P) and ammonium ion. This chain is Glucosamine-6-phosphate deaminase, found in Treponema denticola (strain ATCC 35405 / DSM 14222 / CIP 103919 / JCM 8153 / KCTC 15104).